The sequence spans 414 residues: Transforming growth factor beta-2 proprotein (414 aa).

Positions 1–20 (MHYCVLSAFLLLHLVTAALS) are cleaved as a signal peptide. Asn-72, Asn-140, and Asn-241 each carry an N-linked (GlcNAc...) asparagine glycan. 4 cysteine pairs are disulfide-bonded: Cys-309–Cys-318, Cys-317–Cys-380, Cys-346–Cys-411, and Cys-350–Cys-413.

Belongs to the TGF-beta family. Interacts with the serine proteases, HTRA1 and HTRA3. Interacts with ASPN. Interacts with MFAP5. In terms of assembly, interacts with Transforming growth factor beta-2 (TGF-beta-2) chain; interaction is non-covalent and maintains (TGF-beta-2) in a latent state. Interacts with LRRC32/GARP; leading to regulate activation of TGF-beta-2. Interacts with NREP; the interaction results in a decrease in TGFB2 autoinduction. As to quaternary structure, transforming growth factor beta-2: Homodimer; disulfide-linked. Transforming growth factor beta-2: Interacts with TGF-beta receptors (TGFBR1 and TGFBR2), leading to signal transduction. Post-translationally, the precursor proprotein is cleaved in the Golgi apparatus to form Transforming growth factor beta-2 (TGF-beta-2) and Latency-associated peptide (LAP) chains, which remain non-covalently linked, rendering TGF-beta-2 inactive.

It is found in the secreted. The protein resides in the extracellular space. Its subcellular location is the extracellular matrix. Precursor of the Latency-associated peptide (LAP) and Transforming growth factor beta-2 (TGF-beta-2) chains, which constitute the regulatory and active subunit of TGF-beta-2, respectively. Functionally, required to maintain the Transforming growth factor beta-2 (TGF-beta-2) chain in a latent state during storage in extracellular matrix. Associates non-covalently with TGF-beta-2 and regulates its activation via interaction with 'milieu molecules', such as LTBP1 and LRRC32/GARP, that control activation of TGF-beta-2. Its function is as follows. Multifunctional protein that regulates various processes such as angiogenesis and heart development. Activation into mature form follows different steps: following cleavage of the proprotein in the Golgi apparatus, Latency-associated peptide (LAP) and Transforming growth factor beta-2 (TGF-beta-2) chains remain non-covalently linked rendering TGF-beta-2 inactive during storage in extracellular matrix. At the same time, LAP chain interacts with 'milieu molecules', such as LTBP1 and LRRC32/GARP, that control activation of TGF-beta-2 and maintain it in a latent state during storage in extracellular milieus. Once activated following release of LAP, TGF-beta-2 acts by binding to TGF-beta receptors (TGFBR1 and TGFBR2), which transduce signal. In Mustela putorius furo (European domestic ferret), this protein is Transforming growth factor beta-2 proprotein (TGFB2).